Reading from the N-terminus, the 433-residue chain is Histidine--tRNA ligase (433 aa).

It belongs to the class-II aminoacyl-tRNA synthetase family. As to quaternary structure, homodimer.

It is found in the cytoplasm. The enzyme catalyses tRNA(His) + L-histidine + ATP = L-histidyl-tRNA(His) + AMP + diphosphate + H(+). The chain is Histidine--tRNA ligase from Blochmanniella floridana.